A 128-amino-acid polypeptide reads, in one-letter code: uncharacterized protein (128 aa).

4 consecutive transmembrane segments (helical) span residues 2-22, 34-54, 64-84, and 108-128; these read LPFYFLSVATNAAIGFILTVL, FLYDATFSLVLALLSGIAAVC, LPVLGDLIPTLAGGTGCALFL, and LGLFSLAASILHLLFAPTLFL.

It is found in the cell membrane. This is an uncharacterized protein from Treponema pallidum (strain Nichols).